A 379-amino-acid chain; its full sequence is Alanine racemase (379 aa).

K40 (proton acceptor; specific for D-alanine) is an active-site residue. K40 bears the N6-(pyridoxal phosphate)lysine mark. R138 contacts substrate. The Proton acceptor; specific for L-alanine role is filled by Y267. Position 315 (M315) interacts with substrate.

The protein belongs to the alanine racemase family. It depends on pyridoxal 5'-phosphate as a cofactor.

The catalysed reaction is L-alanine = D-alanine. The protein operates within amino-acid biosynthesis; D-alanine biosynthesis; D-alanine from L-alanine: step 1/1. Functionally, catalyzes the interconversion of L-alanine and D-alanine. May also act on other amino acids. The chain is Alanine racemase (alr) from Halothermothrix orenii (strain H 168 / OCM 544 / DSM 9562).